A 132-amino-acid chain; its full sequence is Holo-[acyl-carrier-protein] synthase (132 aa).

Residues Asp-8 and Glu-57 each coordinate Mg(2+).

Belongs to the P-Pant transferase superfamily. AcpS family. Mg(2+) is required as a cofactor.

The protein resides in the cytoplasm. The catalysed reaction is apo-[ACP] + CoA = holo-[ACP] + adenosine 3',5'-bisphosphate + H(+). Its function is as follows. Transfers the 4'-phosphopantetheine moiety from coenzyme A to a Ser of acyl-carrier-protein. This Methylobacterium nodulans (strain LMG 21967 / CNCM I-2342 / ORS 2060) protein is Holo-[acyl-carrier-protein] synthase.